The sequence spans 229 residues: 7-cyano-7-deazaguanine synthase (229 aa).

14–24 (LSGGQDSTTCL) contributes to the ATP binding site. C192, C200, C203, and C206 together coordinate Zn(2+).

The protein belongs to the QueC family. Requires Zn(2+) as cofactor.

It carries out the reaction 7-carboxy-7-deazaguanine + NH4(+) + ATP = 7-cyano-7-deazaguanine + ADP + phosphate + H2O + H(+). The protein operates within purine metabolism; 7-cyano-7-deazaguanine biosynthesis. In terms of biological role, catalyzes the ATP-dependent conversion of 7-carboxy-7-deazaguanine (CDG) to 7-cyano-7-deazaguanine (preQ(0)). The chain is 7-cyano-7-deazaguanine synthase from Laribacter hongkongensis (strain HLHK9).